A 294-amino-acid chain; its full sequence is Cell division control protein 2 homolog A (294 aa).

Positions 4 to 287 constitute a Protein kinase domain; the sequence is YEKVEKIGEG…ARNALQHEYF (284 aa). Residues 10–18 and K33 each bind ATP; that span reads IGEGTYGVV. A Phosphothreonine modification is found at T14. Y15 bears the Phosphotyrosine mark. Catalysis depends on D127, which acts as the Proton acceptor. T161 is modified (phosphothreonine; by CAK).

It belongs to the protein kinase superfamily. CMGC Ser/Thr protein kinase family. CDC2/CDKX subfamily.

It catalyses the reaction L-seryl-[protein] + ATP = O-phospho-L-seryl-[protein] + ADP + H(+). The catalysed reaction is L-threonyl-[protein] + ATP = O-phospho-L-threonyl-[protein] + ADP + H(+). It carries out the reaction [DNA-directed RNA polymerase] + ATP = phospho-[DNA-directed RNA polymerase] + ADP + H(+). Phosphorylation at Thr-14 or Tyr-15 inactivates the enzyme, while phosphorylation at Thr-161 activates it. Functionally, plays a key role in the control of the eukaryotic cell cycle. The protein is Cell division control protein 2 homolog A (CDC2A) of Antirrhinum majus (Garden snapdragon).